The following is a 411-amino-acid chain: S-adenosylmethionine synthase (411 aa).

H15 lines the ATP pocket. D17 contacts Mg(2+). E43 is a binding site for K(+). E56 and Q100 together coordinate L-methionine. Residues 100 to 110 are flexible loop; that stretch reads QSPDIAQGVNE. Residues 171–173, 248–249, D257, 263–264, A280, and K284 each bind ATP; these read DGK, KF, and RK. D257 lines the L-methionine pocket. K288 provides a ligand contact to L-methionine.

Belongs to the AdoMet synthase family. As to quaternary structure, homotetramer; dimer of dimers. Requires Mg(2+) as cofactor. K(+) is required as a cofactor.

Its subcellular location is the cytoplasm. It carries out the reaction L-methionine + ATP + H2O = S-adenosyl-L-methionine + phosphate + diphosphate. It participates in amino-acid biosynthesis; S-adenosyl-L-methionine biosynthesis; S-adenosyl-L-methionine from L-methionine: step 1/1. Functionally, catalyzes the formation of S-adenosylmethionine (AdoMet) from methionine and ATP. The overall synthetic reaction is composed of two sequential steps, AdoMet formation and the subsequent tripolyphosphate hydrolysis which occurs prior to release of AdoMet from the enzyme. The chain is S-adenosylmethionine synthase from Synechococcus sp. (strain CC9605).